Consider the following 131-residue polypeptide: Small ribosomal subunit protein uS8 (131 aa).

This sequence belongs to the universal ribosomal protein uS8 family. In terms of assembly, part of the 30S ribosomal subunit. Contacts proteins S5 and S12.

In terms of biological role, one of the primary rRNA binding proteins, it binds directly to 16S rRNA central domain where it helps coordinate assembly of the platform of the 30S subunit. This chain is Small ribosomal subunit protein uS8, found in Helicobacter pylori (strain P12).